A 334-amino-acid chain; its full sequence is Thioredoxin reductase (334 aa).

FAD is bound by residues 10–13, 39–40, Gln44, Asn53, Val86, Cys143, Asp287, and 294–296; these read SGPA, IA, and RQA. Cys140 and Cys143 are joined by a disulfide.

The protein belongs to the class-II pyridine nucleotide-disulfide oxidoreductase family. In terms of assembly, homodimer. FAD serves as cofactor.

The protein resides in the cytoplasm. It catalyses the reaction [thioredoxin]-dithiol + NADP(+) = [thioredoxin]-disulfide + NADPH + H(+). The sequence is that of Thioredoxin reductase (cys-9) from Neurospora crassa (strain ATCC 24698 / 74-OR23-1A / CBS 708.71 / DSM 1257 / FGSC 987).